Reading from the N-terminus, the 242-residue chain is Ribonuclease 3 (242 aa).

One can recognise an RNase III domain in the interval 18–146; the sequence is APAIEAKLGY…IIGAIYLDGG (129 aa). Position 59 (E59) interacts with Mg(2+). The active site involves D63. 2 residues coordinate Mg(2+): D132 and E135. E135 is a catalytic residue. Residues 172–241 form the DRBM domain; the sequence is NWKALLQDYC…AADALSRVEL (70 aa). Residues 218-227 are compositionally biased toward basic and acidic residues; that stretch reads RGKGTSKKEA. The disordered stretch occupies residues 218 to 242; that stretch reads RGKGTSKKEAQQAAAADALSRVELP.

The protein belongs to the ribonuclease III family. In terms of assembly, homodimer. Mg(2+) is required as a cofactor.

It localises to the cytoplasm. It carries out the reaction Endonucleolytic cleavage to 5'-phosphomonoester.. Its function is as follows. Digests double-stranded RNA. Involved in the processing of primary rRNA transcript to yield the immediate precursors to the large and small rRNAs (23S and 16S). Processes some mRNAs, and tRNAs when they are encoded in the rRNA operon. Processes pre-crRNA and tracrRNA of type II CRISPR loci if present in the organism. This Protochlamydia amoebophila (strain UWE25) protein is Ribonuclease 3.